We begin with the raw amino-acid sequence, 748 residues long: Choline O-acetyltransferase (748 aa).

The span at 1 to 10 (MGLRTAKKRG) shows a compositional bias: basic residues. The interval 1–89 (MGLRTAKKRG…EWCGAASAEA (89 aa)) is disordered. A compositionally biased stretch (basic and acidic residues) spans 17–32 (WKREEGGGTRGRREVR). Over residues 40-53 (GGRGDPGDVGGPAG) the composition is skewed to gly residues. 2 stretches are compositionally biased toward low complexity: residues 54 to 65 (NPGCSPHPRAAT) and 73 to 89 (HTPAHTPEWCGAASAEA). S125 is modified (phosphoserine). H442 serves as the catalytic Proton acceptor. S473 is modified (phosphoserine). CoA contacts are provided by residues 520–532 (GKTFIKKQKCSPD), S558, and Q659. The segment at 727–748 (PTESKPLATKEKATRPSQGHQP) is disordered.

It belongs to the carnitine/choline acetyltransferase family.

It catalyses the reaction choline + acetyl-CoA = acetylcholine + CoA. In terms of biological role, catalyzes the reversible synthesis of acetylcholine (ACh) from acetyl CoA and choline at cholinergic synapses. This Homo sapiens (Human) protein is Choline O-acetyltransferase (CHAT).